Here is a 483-residue protein sequence, read N- to C-terminus: GDP-fucose protein O-fucosyltransferase 4 (483 aa).

Methionine 1 is a topological domain (cytoplasmic). The helical; Signal-anchor for type II membrane protein transmembrane segment at alanine 2–valine 21 threads the bilayer. Over aspartate 22–arginine 483 the chain is Lumenal. N-linked (GlcNAc...) asparagine glycans are attached at residues asparagine 151 and asparagine 303. Residues cysteine 374 and cysteine 377 are joined by a disulfide bond. Positions arginine 387–valine 425 are disordered. 4 N-linked (GlcNAc...) asparagine glycosylation sites follow: asparagine 406, asparagine 428, asparagine 456, and asparagine 480.

The protein belongs to the glycosyltransferase 10 family.

It localises to the endoplasmic reticulum membrane. The catalysed reaction is L-threonyl-[protein] + GDP-beta-L-fucose = 3-O-(alpha-L-fucosyl)-L-threonyl-[protein] + GDP + H(+). It carries out the reaction L-seryl-[protein] + GDP-beta-L-fucose = 3-O-(alpha-L-fucosyl)-L-seryl-[protein] + GDP + H(+). Its pathway is protein modification; protein glycosylation. Its function is as follows. Protein O-fucosyltransferase that specifically catalyzes O-fucosylation of serine or threonine residues in EMI domains of target proteins. Attaches fucose through an O-glycosidic linkage. O-fucosylation of EMI domain-containing proteins may be required for facilitating protein folding and secretion. This Danio rerio (Zebrafish) protein is GDP-fucose protein O-fucosyltransferase 4 (fut11).